We begin with the raw amino-acid sequence, 146 residues long: Hemoglobin subunit beta (146 aa).

Residues 2 to 146 (HWTAEEKSAI…VAHALAHQYH (145 aa)) enclose the Globin domain. Heme b is bound by residues His-63 and His-92.

The protein belongs to the globin family. Heterotetramer of two alpha chains and two beta chains. Oxygenation results in dissociation to dimers. As to expression, red blood cells.

In terms of biological role, involved in oxygen transport from the lung to the various peripheral tissues. The protein is Hemoglobin subunit beta (HBB) of Erythrolamprus miliaris (South American water snake).